The sequence spans 255 residues: Triosephosphate isomerase (255 aa).

9–11 (NWK) is a binding site for substrate. Histidine 95 functions as the Electrophile in the catalytic mechanism. The active-site Proton acceptor is glutamate 167. Substrate-binding positions include glycine 173, serine 212, and 233–234 (GG).

This sequence belongs to the triosephosphate isomerase family. Homodimer.

The protein resides in the cytoplasm. It carries out the reaction D-glyceraldehyde 3-phosphate = dihydroxyacetone phosphate. Its pathway is carbohydrate biosynthesis; gluconeogenesis. It participates in carbohydrate degradation; glycolysis; D-glyceraldehyde 3-phosphate from glycerone phosphate: step 1/1. Functionally, involved in the gluconeogenesis. Catalyzes stereospecifically the conversion of dihydroxyacetone phosphate (DHAP) to D-glyceraldehyde-3-phosphate (G3P). The sequence is that of Triosephosphate isomerase from Escherichia fergusonii (strain ATCC 35469 / DSM 13698 / CCUG 18766 / IAM 14443 / JCM 21226 / LMG 7866 / NBRC 102419 / NCTC 12128 / CDC 0568-73).